We begin with the raw amino-acid sequence, 447 residues long: MYKQSWKLLGRGQDADFTVAYINARIIDPESKLDIIGSLLTKGDKIVDFGQDLFNNGIPSTIDEVVDCNNNILMPGLIDIHVHFREPGQEHKETIHTGSKSAAAGGVTTVVCQPNTIPTISSIITAKYIKMRALESAYVNIEFYASITKPDNSLSDMALLKEAGAVGFTDDGMPVMNSLTMRQALSYSSMLDTVVAQHAEDLNLSNNGHINEGTVSYELGLKGIPDISESIIVNRDIALMKNIKNVHYHILHVSSQDSLNIIKQAKNQGLKVTCEVTPHHLTLTEQDVITHGTLAKINPPLRTENDRLSMVEGLKNGIIDCIATDHAPHEVNTKELPLDTAAFGIVGLETMLPISLELYHNGTISLIDLLATLTYKPANIIKVPRGRIKKGFVADLIILDLNHEWTIDILKFASKSKNSPFHNRKVKGKVLRTIVSGKTTYTAVRNI.

Residues His-81 and His-83 each coordinate Zn(2+). Substrate is bound by residues 83-85 (HFR) and Asn-115. Zn(2+)-binding residues include Asp-171, His-198, and His-252. Asn-298 contributes to the substrate binding site. Asp-325 serves as a coordination point for Zn(2+). The active site involves Asp-325. Substrate-binding positions include His-329 and 343–344 (FG).

Belongs to the metallo-dependent hydrolases superfamily. DHOase family. Class I DHOase subfamily. Zn(2+) is required as a cofactor.

It catalyses the reaction (S)-dihydroorotate + H2O = N-carbamoyl-L-aspartate + H(+). The protein operates within pyrimidine metabolism; UMP biosynthesis via de novo pathway; (S)-dihydroorotate from bicarbonate: step 3/3. Its function is as follows. Catalyzes the reversible cyclization of carbamoyl aspartate to dihydroorotate. The protein is Dihydroorotase of Ehrlichia canis (strain Jake).